The primary structure comprises 399 residues: Glycerate 2-kinase (399 aa).

Residue Lys48 participates in substrate binding.

The protein belongs to the glycerate kinase type-1 family. In terms of assembly, homodimer. Mg(2+) is required as a cofactor. The cofactor is Ni(2+). Mn(2+) serves as cofactor. It depends on Co(2+) as a cofactor. Requires Ca(2+) as cofactor. Zn(2+) is required as a cofactor. The cofactor is Sr(2+).

The catalysed reaction is (R)-glycerate + ATP = (2R)-2-phosphoglycerate + ADP + H(+). Functionally, catalyzes the ATP-dependent phosphorylation of D-glycerate to 2-phosphoglycerate. It can also utilize GTP, CTP, UTP, ADP, AMP or pyrophosphate as phosphate donor. The polypeptide is Glycerate 2-kinase (gck) (Sulfurisphaera tokodaii (strain DSM 16993 / JCM 10545 / NBRC 100140 / 7) (Sulfolobus tokodaii)).